A 250-amino-acid polypeptide reads, in one-letter code: MDRDEIVSFLDEFLNISAYPDKSKNGLQVEGKEEVNTIAFAVDASLDTILKAKVFNADMLIVHHGIIWGGISYVRGLIAKRLKELLVAGINLYAVHLPLDAHPEVGNNVQLLKLLNLEAKEPFGEYHGVKIGYIGEFDEPKPLPLIAQILAEKLPAEYVKSYEFGLQEVKRIAVVSGGGGFAIEEASRKADLLITGEITHEDYRVAEDLRVSVIAAGHYATETLGVKALMGVLKEKFGVKTVFIDNPTGL.

5 residues coordinate a divalent metal cation: His63, His64, Asp100, His218, and Glu222.

This sequence belongs to the GTP cyclohydrolase I type 2/NIF3 family. As to quaternary structure, homohexamer.

The protein is GTP cyclohydrolase 1 type 2 homolog of Pyrococcus horikoshii (strain ATCC 700860 / DSM 12428 / JCM 9974 / NBRC 100139 / OT-3).